The chain runs to 759 residues: DNA topoisomerase 4 subunit A (759 aa).

Positions 44 to 516 constitute a Topo IIA-type catalytic domain; the sequence is LPDVRDGLKP…VFGEAPQVDA (473 aa). Catalysis depends on Y132, which acts as the O-(5'-phospho-DNA)-tyrosine intermediate.

The protein belongs to the type II topoisomerase GyrA/ParC subunit family. ParC type 1 subfamily. As to quaternary structure, heterotetramer composed of ParC and ParE.

The protein resides in the cell membrane. The catalysed reaction is ATP-dependent breakage, passage and rejoining of double-stranded DNA.. Its function is as follows. Topoisomerase IV is essential for chromosome segregation. It relaxes supercoiled DNA. Performs the decatenation events required during the replication of a circular DNA molecule. This Caulobacter vibrioides (strain ATCC 19089 / CIP 103742 / CB 15) (Caulobacter crescentus) protein is DNA topoisomerase 4 subunit A.